The primary structure comprises 272 residues: Zinc transporter ZupT (272 aa).

The next 8 membrane-spanning stretches (helical) occupy residues 12–32, 40–60, 76–96, 126–146, 158–178, 187–207, 211–231, and 247–267; these read ALAV…MVVF, LLAF…LSEI, LGFT…MVID, LLTA…TFFA, AFAI…PVYF, FGAS…GYLL, VLSE…MVFL, and HETV…LVLF. Positions 136 and 139 each coordinate Fe(2+). 2 residues coordinate Zn(2+): glutamate 139 and histidine 164. The Fe(2+) site is built by asparagine 165, glutamate 168, and glutamate 197. Glutamate 168 contacts Zn(2+).

The protein belongs to the ZIP transporter (TC 2.A.5) family. ZupT subfamily.

The protein localises to the cell inner membrane. It carries out the reaction Zn(2+)(in) = Zn(2+)(out). In terms of biological role, mediates zinc uptake. May also transport other divalent cations. In Xanthomonas campestris pv. campestris (strain ATCC 33913 / DSM 3586 / NCPPB 528 / LMG 568 / P 25), this protein is Zinc transporter ZupT.